A 216-amino-acid polypeptide reads, in one-letter code: Small ribosomal subunit protein uS3c (216 aa).

One can recognise a KH type-2 domain in the interval 43–118 (IKNYIQKNRR…RLKIAITRVE (76 aa)).

The protein belongs to the universal ribosomal protein uS3 family. As to quaternary structure, part of the 30S ribosomal subunit.

It is found in the plastid. The protein resides in the chloroplast. This Dioscorea elephantipes (Elephant's foot yam) protein is Small ribosomal subunit protein uS3c (rps3).